The following is a 284-amino-acid chain: Putative L-ribulose-5-phosphate 3-epimerase UlaE (284 aa).

Belongs to the L-ribulose-5-phosphate 3-epimerase family.

The enzyme catalyses L-ribulose 5-phosphate = L-xylulose 5-phosphate. It functions in the pathway cofactor degradation; L-ascorbate degradation; D-xylulose 5-phosphate from L-ascorbate: step 3/4. In terms of biological role, catalyzes the isomerization of L-xylulose-5-phosphate to L-ribulose-5-phosphate. Is involved in the anaerobic L-ascorbate utilization. The protein is Putative L-ribulose-5-phosphate 3-epimerase UlaE of Shigella dysenteriae serotype 1 (strain Sd197).